Consider the following 179-residue polypeptide: Orotate phosphoribosyltransferase (179 aa).

5-phospho-alpha-D-ribose 1-diphosphate contacts are provided by residues R24, R89, K90, K93, and E115 to A123. 2 residues coordinate orotate: T119 and R147.

It belongs to the purine/pyrimidine phosphoribosyltransferase family. PyrE subfamily. As to quaternary structure, homodimer. The cofactor is Mg(2+).

The catalysed reaction is orotidine 5'-phosphate + diphosphate = orotate + 5-phospho-alpha-D-ribose 1-diphosphate. It functions in the pathway pyrimidine metabolism; UMP biosynthesis via de novo pathway; UMP from orotate: step 1/2. Its function is as follows. Catalyzes the transfer of a ribosyl phosphate group from 5-phosphoribose 1-diphosphate to orotate, leading to the formation of orotidine monophosphate (OMP). The polypeptide is Orotate phosphoribosyltransferase (Nocardioides sp. (strain ATCC BAA-499 / JS614)).